Here is a 314-residue protein sequence, read N- to C-terminus: MKLLEIKIESSYDVEDALAYFATEDLKALGTEARRRSDFEQAGWLHDSTVVDMDDIPNLPDELEFIAYFDEETDPEEMVKCFKDKLAELAGYGLKTAPGEISVDYVADQDWNTVWKKYYHVINLSRHLAIVPEWEDYQPVFKDQEIIRLDPGLAFGTGNHQTTQLAMLGIERAMVKPLTVADVGTGSGILAIAAHKLGAKSVLATDISDESMTAAEENAALNGIYDIALQKTSLLADVDGKFDLIVANILAEILLDLIPQLDSHLNEDGQVIFSGIDYLQLPKIEQALAENSFQIDLKMRAGRWIGLAISRKHD.

S-adenosyl-L-methionine-binding residues include Thr-163, Gly-184, Asp-206, and Asn-248.

Belongs to the methyltransferase superfamily. PrmA family.

Its subcellular location is the cytoplasm. The enzyme catalyses L-lysyl-[protein] + 3 S-adenosyl-L-methionine = N(6),N(6),N(6)-trimethyl-L-lysyl-[protein] + 3 S-adenosyl-L-homocysteine + 3 H(+). Functionally, methylates ribosomal protein L11. The polypeptide is Ribosomal protein L11 methyltransferase (Lactobacillus delbrueckii subsp. bulgaricus (strain ATCC BAA-365 / Lb-18)).